A 228-amino-acid chain; its full sequence is L-ribulose-5-phosphate 4-epimerase UlaF (228 aa).

Residues 26 to 27, 43 to 44, and 72 to 73 contribute to the substrate site; these read GN, SG, and SS. Zn(2+) contacts are provided by Asp74, His93, and His95. Asp118 serves as the catalytic Proton donor/acceptor. Residue His167 participates in Zn(2+) binding. The active-site Proton donor/acceptor is the Tyr225.

The protein belongs to the aldolase class II family. AraD/FucA subfamily. Zn(2+) is required as a cofactor.

It carries out the reaction L-ribulose 5-phosphate = D-xylulose 5-phosphate. It participates in cofactor degradation; L-ascorbate degradation; D-xylulose 5-phosphate from L-ascorbate: step 4/4. Its function is as follows. Catalyzes the isomerization of L-ribulose 5-phosphate to D-xylulose 5-phosphate. Is involved in the anaerobic L-ascorbate utilization. The chain is L-ribulose-5-phosphate 4-epimerase UlaF from Escherichia coli O8 (strain IAI1).